Here is a 791-residue protein sequence, read N- to C-terminus: Transient receptor potential cation channel subfamily V member 3 (791 aa).

Disordered stretches follow at residues 1-37, 52-71, and 76-113; these read MNAH…LTPT, PNPT…MDSN, and LSGN…EEQR. The Cytoplasmic segment spans residues 1 to 430; sequence MNAHSKEMAP…TLEPLHTLLH (430 aa). The segment covering 95–105 has biased composition (polar residues); that stretch reads ETPSNPNSPSA. ANK repeat units lie at residues 117 to 148, 170 to 198, 214 to 243, 261 to 291, 298 to 330, 340 to 362, and 398 to 420; these read KRLK…LCRR, TCLM…EEND, EGQT…DVNA, FGET…DITS, NILH…RSGN, DGLT…YILS, and TTDN…HEML. The helical transmembrane segment at 431-460 threads the bilayer; the sequence is TKWKKFAKYMFFLSFCFYFFYNITLTLVSY. The Extracellular portion of the chain corresponds to 461–479; that stretch reads YRPREDEDLPHPLALTHKM. Residues 480–508 form a helical membrane-spanning segment; sequence SWLQLLGRMFVLIWATCISVKEGIAIFLL. The Cytoplasmic portion of the chain corresponds to 509-519; sequence RPSDLQSILSD. The chain crosses the membrane as a helical span at residues 520–540; it reads AWFHFVFFVQAVLVILSVFLY. Topologically, residues 541–545 are extracellular; sequence LFAYK. Residues 546-566 form a helical membrane-spanning segment; the sequence is EYLACLVLAMALGWANMLYYT. Residues 567–569 lie on the Cytoplasmic side of the membrane; that stretch reads RGF. The chain crosses the membrane as a helical span at residues 570–608; it reads QSMGMYSVMIQKVILHDVLKFLFVYILFLLGFGVALASL. At 609–620 the chain is on the extracellular side; the sequence is IEKCSKDKKDCS. An intramembrane region (pore-forming) is located at residues 621–646; sequence SYGSFSDAVLELFKLTIGLGDLNIQQ. Gly-638 is a Na(+) binding site. The Extracellular segment spans residues 647–649; it reads NST. The chain crosses the membrane as a helical span at residues 650-686; that stretch reads YPILFLFLLITYVILTFVLLLNMLIALMGETVENVSK. At 687 to 791 the chain is on the cytoplasmic side; it reads ESERIWRLQR…ELDEFPETSV (105 aa).

Belongs to the transient receptor (TC 1.A.4) family. TrpV subfamily. TRPV3 sub-subfamily. In terms of assembly, homotetramer. May convert from a homotetramer to a homopentamer to allow pore dilation. Interacts with TRPV1; may form a heteromeric channel with TRPV1. Interacts with SNX11; this interaction promotes TRPV3 trafficking from the cell membrane to lysosome for degradation. In terms of tissue distribution, expressed in keratinocytes and hair follicles.

The protein resides in the cell membrane. The protein localises to the cytoplasm. Its subcellular location is the lysosome. It catalyses the reaction Ca(2+)(in) = Ca(2+)(out). The catalysed reaction is Mg(2+)(in) = Mg(2+)(out). The enzyme catalyses Na(+)(in) = Na(+)(out). It carries out the reaction K(+)(in) = K(+)(out). With respect to regulation, activated by cannabinoid that binds to the vanilloid binding pocket. Diphenylboronic anhydride induces pore dilation and enhances cation permeability by promoting the conversion to a homopentamer. Its function is as follows. Non-selective calcium permeant cation channel. It is activated by innocuous (warm) temperatures and shows an increased response at noxious temperatures greater than 39 degrees Celsius. Activation exhibits an outward rectification. The channel pore can dilate to provide permeability to larger cations. May associate with TRPV1 and may modulate its activity. Is a negative regulator of hair growth and cycling: TRPV3-coupled signaling suppresses keratinocyte proliferation in hair follicles and induces apoptosis and premature hair follicle regression (catagen). This is Transient receptor potential cation channel subfamily V member 3 (Trpv3) from Mus musculus (Mouse).